The primary structure comprises 236 residues: Orotidine 5'-phosphate decarboxylase (236 aa).

Residues aspartate 11, lysine 33, 60–69 (DLKLHDIPNT), threonine 119, arginine 181, glutamine 190, glycine 210, and arginine 211 contribute to the substrate site. Lysine 62 acts as the Proton donor in catalysis.

Belongs to the OMP decarboxylase family. Type 1 subfamily. In terms of assembly, homodimer.

It catalyses the reaction orotidine 5'-phosphate + H(+) = UMP + CO2. It participates in pyrimidine metabolism; UMP biosynthesis via de novo pathway; UMP from orotate: step 2/2. Its function is as follows. Catalyzes the decarboxylation of orotidine 5'-monophosphate (OMP) to uridine 5'-monophosphate (UMP). The chain is Orotidine 5'-phosphate decarboxylase from Cutibacterium acnes (strain DSM 16379 / KPA171202) (Propionibacterium acnes).